The sequence spans 472 residues: Phosphoenolpyruvate carboxykinase (ATP), glycosomal (472 aa).

Position 221-228 (G221–T228) interacts with ATP.

The protein belongs to the phosphoenolpyruvate carboxykinase (ATP) family. In terms of assembly, homodimer.

It localises to the glycosome. It carries out the reaction oxaloacetate + ATP = phosphoenolpyruvate + ADP + CO2. Its pathway is carbohydrate biosynthesis; gluconeogenesis. This is Phosphoenolpyruvate carboxykinase (ATP), glycosomal (PEPCK) from Trypanosoma cruzi.